A 347-amino-acid chain; its full sequence is Holliday junction branch migration complex subunit RuvB (347 aa).

The tract at residues 1 to 183 is large ATPase domain (RuvB-L); the sequence is MTDVPRMVTP…FGIPVRLNFY (183 aa). ATP contacts are provided by residues Leu-22, Arg-23, Gly-64, Lys-67, Thr-68, Thr-69, 130–132, Arg-173, Tyr-183, and Arg-220; that span reads EDF. Position 68 (Thr-68) interacts with Mg(2+). Positions 184–254 are small ATPAse domain (RuvB-S); that stretch reads TVDELEKIVS…IADHALGALE (71 aa). A head domain (RuvB-H) region spans residues 257–347; the sequence is AAGLDAMDRR…QFGLFGGEDE (91 aa). DNA contacts are provided by Arg-293, Arg-312, and Arg-317.

Belongs to the RuvB family. As to quaternary structure, homohexamer. Forms an RuvA(8)-RuvB(12)-Holliday junction (HJ) complex. HJ DNA is sandwiched between 2 RuvA tetramers; dsDNA enters through RuvA and exits via RuvB. An RuvB hexamer assembles on each DNA strand where it exits the tetramer. Each RuvB hexamer is contacted by two RuvA subunits (via domain III) on 2 adjacent RuvB subunits; this complex drives branch migration. In the full resolvosome a probable DNA-RuvA(4)-RuvB(12)-RuvC(2) complex forms which resolves the HJ.

Its subcellular location is the cytoplasm. It catalyses the reaction ATP + H2O = ADP + phosphate + H(+). Functionally, the RuvA-RuvB-RuvC complex processes Holliday junction (HJ) DNA during genetic recombination and DNA repair, while the RuvA-RuvB complex plays an important role in the rescue of blocked DNA replication forks via replication fork reversal (RFR). RuvA specifically binds to HJ cruciform DNA, conferring on it an open structure. The RuvB hexamer acts as an ATP-dependent pump, pulling dsDNA into and through the RuvAB complex. RuvB forms 2 homohexamers on either side of HJ DNA bound by 1 or 2 RuvA tetramers; 4 subunits per hexamer contact DNA at a time. Coordinated motions by a converter formed by DNA-disengaged RuvB subunits stimulates ATP hydrolysis and nucleotide exchange. Immobilization of the converter enables RuvB to convert the ATP-contained energy into a lever motion, pulling 2 nucleotides of DNA out of the RuvA tetramer per ATP hydrolyzed, thus driving DNA branch migration. The RuvB motors rotate together with the DNA substrate, which together with the progressing nucleotide cycle form the mechanistic basis for DNA recombination by continuous HJ branch migration. Branch migration allows RuvC to scan DNA until it finds its consensus sequence, where it cleaves and resolves cruciform DNA. The chain is Holliday junction branch migration complex subunit RuvB from Nitrobacter hamburgensis (strain DSM 10229 / NCIMB 13809 / X14).